The sequence spans 234 residues: MDRFPRSDSIVQPRAGLQTYMAQVYGWMTVGLLLTAFVAWYAANSAAVMELLFTNRVFLIGLIIAQLALVIVLSAMIQKLSAGVTTMLFMLYSALTGLTLSSIFIVYTAASIASTFVVTAGMFGAMSLYGYTTKRDLSGFGNMLFMALIGIVLASLVNFWLKSEALMWAVTYIGVIVFVGLTAYDTQKLKNMGEQIDTRDTSNLRKYSILGALTLYLDFINLFLMLLRIFGNRR.

Over 1 to 23 the chain is Periplasmic; the sequence is MDRFPRSDSIVQPRAGLQTYMAQ. Residues 24-44 traverse the membrane as a helical segment; the sequence is VYGWMTVGLLLTAFVAWYAAN. At 45–56 the chain is on the cytoplasmic side; the sequence is SAAVMELLFTNR. Residues 57–77 form a helical membrane-spanning segment; that stretch reads VFLIGLIIAQLALVIVLSAMI. Residues 78 to 79 lie on the Periplasmic side of the membrane; it reads QK. A helical transmembrane segment spans residues 80–100; it reads LSAGVTTMLFMLYSALTGLTL. Over 101 to 102 the chain is Cytoplasmic; that stretch reads SS. A helical transmembrane segment spans residues 103–123; it reads IFIVYTAASIASTFVVTAGMF. Residues 124–136 lie on the Periplasmic side of the membrane; that stretch reads GAMSLYGYTTKRD. A helical membrane pass occupies residues 137 to 157; sequence LSGFGNMLFMALIGIVLASLV. Topologically, residues 158 to 163 are cytoplasmic; that stretch reads NFWLKS. Residues 164-184 form a helical membrane-spanning segment; that stretch reads EALMWAVTYIGVIVFVGLTAY. Residues 185 to 206 are Periplasmic-facing; it reads DTQKLKNMGEQIDTRDTSNLRK. The helical transmembrane segment at 207 to 227 threads the bilayer; that stretch reads YSILGALTLYLDFINLFLMLL. Residues 228–234 lie on the Cytoplasmic side of the membrane; it reads RIFGNRR.

Belongs to the BI1 family.

It is found in the cell inner membrane. This chain is Inner membrane protein YbhL (ybhL), found in Escherichia coli (strain K12).